The chain runs to 211 residues: dITP/XTP pyrophosphatase (211 aa).

7–12 (TSNKKK) contributes to the substrate binding site. Residues E43 and D72 each coordinate Mg(2+). Catalysis depends on D72, which acts as the Proton acceptor. Substrate contacts are provided by residues S73, 169–172 (FGYD), K190, and 195–196 (HR).

It belongs to the HAM1 NTPase family. Homodimer. The cofactor is Mg(2+).

The catalysed reaction is XTP + H2O = XMP + diphosphate + H(+). It carries out the reaction dITP + H2O = dIMP + diphosphate + H(+). The enzyme catalyses ITP + H2O = IMP + diphosphate + H(+). In terms of biological role, pyrophosphatase that catalyzes the hydrolysis of nucleoside triphosphates to their monophosphate derivatives, with a high preference for the non-canonical purine nucleotides XTP (xanthosine triphosphate), dITP (deoxyinosine triphosphate) and ITP. Seems to function as a house-cleaning enzyme that removes non-canonical purine nucleotides from the nucleotide pool, thus preventing their incorporation into DNA/RNA and avoiding chromosomal lesions. The polypeptide is dITP/XTP pyrophosphatase (Hydrogenobaculum sp. (strain Y04AAS1)).